The primary structure comprises 2345 residues: Acetyl-CoA carboxylase 1 (2345 aa).

M1 carries the post-translational modification N-acetylmethionine. Phosphoserine occurs at positions 5, 23, 25, 29, 34, 47, 49, and 52. T57 bears the Phosphothreonine mark. S77 is subject to Phosphoserine. S79 carries the phosphoserine; by AMPK modification. The region spanning 116–617 (VIEKVLIANN…DTGWLDRLIA (502 aa)) is the Biotin carboxylation domain. The ATP-grasp domain occupies 274-465 (SKRILNVPQD…LPAAQLQIAM (192 aa)). 314–319 (GGGGKG) lines the ATP pocket. The Mg(2+) site is built by E423, E436, and N438. Residues E423, E436, and N438 each contribute to the Mn(2+) site. The active site involves R440. Residue T609 is modified to Phosphothreonine. Residues 744 to 818 (FEKENDPSVM…DPGCVIAKMQ (75 aa)) form the Biotinyl-binding domain. K785 is subject to N6-biotinyllysine. Residue S834 is modified to Phosphoserine. Phosphoserine; by AMPK; in vitro is present on residues S1200 and S1215. The residue at position 1217 (S1217) is a Phosphoserine. T1226 is subject to Phosphothreonine. 3 positions are modified to phosphoserine: S1258, S1262, and S1272. K1333 carries the N6-acetyllysine modification. Residues 1575–1913 (PYVTKDLLQS…NVHSSVPLLN (339 aa)) enclose the CoA carboxyltransferase N-terminal domain. The segment at 1575–2233 (PYVTKDLLQS…EDLVKKKIHS (659 aa)) is carboxyltransferase. R1822, K2126, and R2128 together coordinate CoA. Positions 1917 to 2233 (PIDRIIEFVP…EDLVKKKIHS (317 aa)) constitute a CoA carboxyltransferase C-terminal domain. Residue T2152 is modified to Phosphothreonine.

In terms of assembly, monomer, homodimer, and homotetramer. Can form filamentous polymers. Interacts in its inactive phosphorylated form with the BRCT domains of BRCA1 which prevents ACACA dephosphorylation and inhibits lipid synthesis. Interacts with MID1IP1; interaction with MID1IP1 promotes oligomerization and increases its activity. It depends on Mg(2+) as a cofactor. Mn(2+) serves as cofactor. The cofactor is biotin. The N-terminus is blocked. In terms of processing, phosphorylation on Ser-1262 is required for interaction with BRCA1. Post-translationally, phosphorylation at Ser-79 by AMPK inactivates enzyme activity. Phosphorylated in vitro at Ser-1200 and Ser-1215 by AMPK; the relevance of phosphorylation of these sites in vivo is however unclear. The biotin cofactor is covalently attached to the central biotinyl-binding domain and is required for the catalytic activity.

The protein resides in the cytoplasm. The protein localises to the cytosol. It catalyses the reaction hydrogencarbonate + acetyl-CoA + ATP = malonyl-CoA + ADP + phosphate + H(+). The protein operates within lipid metabolism; malonyl-CoA biosynthesis; malonyl-CoA from acetyl-CoA: step 1/1. With respect to regulation, inhibited by phosphorylation. Citrate promotes oligomerization of the protein into filaments that correspond to the most active form of the carboxylase. Its function is as follows. Cytosolic enzyme that catalyzes the carboxylation of acetyl-CoA to malonyl-CoA, the first and rate-limiting step of de novo fatty acid biosynthesis. This is a 2 steps reaction starting with the ATP-dependent carboxylation of the biotin carried by the biotin carboxyl carrier (BCC) domain followed by the transfer of the carboxyl group from carboxylated biotin to acetyl-CoA. In Rattus norvegicus (Rat), this protein is Acetyl-CoA carboxylase 1.